We begin with the raw amino-acid sequence, 202 residues long: N-(5'-phosphoribosyl)anthranilate isomerase (202 aa).

Belongs to the TrpF family.

The catalysed reaction is N-(5-phospho-beta-D-ribosyl)anthranilate = 1-(2-carboxyphenylamino)-1-deoxy-D-ribulose 5-phosphate. The protein operates within amino-acid biosynthesis; L-tryptophan biosynthesis; L-tryptophan from chorismate: step 3/5. The protein is N-(5'-phosphoribosyl)anthranilate isomerase of Listeria monocytogenes serotype 4a (strain HCC23).